A 270-amino-acid chain; its full sequence is NAD(P)H-hydrate epimerase (270 aa).

Positions 25–234 constitute a YjeF N-terminal domain; sequence FQQLMDLMQN…DLLAPEEIYQ (210 aa). 73-77 provides a ligand contact to (6S)-NADPHX; it reads DNGGQ. N74 and D144 together coordinate K(+). (6S)-NADPHX contacts are provided by residues 148–154 and E177; that span reads GVGLYGH. Residue T180 coordinates K(+).

This sequence belongs to the NnrE/AIBP family. The cofactor is K(+).

The catalysed reaction is (6R)-NADHX = (6S)-NADHX. It carries out the reaction (6R)-NADPHX = (6S)-NADPHX. Catalyzes the epimerization of the S- and R-forms of NAD(P)HX, a damaged form of NAD(P)H that is a result of enzymatic or heat-dependent hydration. This is a prerequisite for the S-specific NAD(P)H-hydrate dehydratase to allow the repair of both epimers of NAD(P)HX. The protein is NAD(P)H-hydrate epimerase of Legionella pneumophila (strain Paris).